The following is a 53-amino-acid chain: uncharacterized protein (53 aa).

This is an uncharacterized protein from Dictyostelium discoideum (Social amoeba).